The sequence spans 103 residues: NADH-quinone oxidoreductase subunit K (103 aa).

The next 3 helical transmembrane spans lie at 6 to 26 (IEYY…GFLL), 30 to 50 (LLVL…TLVA), and 66 to 86 (FFVI…VLAF).

The protein belongs to the complex I subunit 4L family. In terms of assembly, NDH-1 is composed of 14 different subunits. Subunits NuoA, H, J, K, L, M, N constitute the membrane sector of the complex.

The protein localises to the cell inner membrane. It catalyses the reaction a quinone + NADH + 5 H(+)(in) = a quinol + NAD(+) + 4 H(+)(out). In terms of biological role, NDH-1 shuttles electrons from NADH, via FMN and iron-sulfur (Fe-S) centers, to quinones in the respiratory chain. The immediate electron acceptor for the enzyme in this species is believed to be ubiquinone. Couples the redox reaction to proton translocation (for every two electrons transferred, four hydrogen ions are translocated across the cytoplasmic membrane), and thus conserves the redox energy in a proton gradient. The protein is NADH-quinone oxidoreductase subunit K of Sorangium cellulosum (strain So ce56) (Polyangium cellulosum (strain So ce56)).